A 195-amino-acid polypeptide reads, in one-letter code: A-type ATP synthase subunit E (195 aa).

Belongs to the V-ATPase E subunit family. In terms of assembly, has multiple subunits with at least A(3), B(3), C, D, E, F, H, I and proteolipid K(x).

It is found in the cell membrane. Component of the A-type ATP synthase that produces ATP from ADP in the presence of a proton gradient across the membrane. The sequence is that of A-type ATP synthase subunit E from Staphylothermus marinus (strain ATCC 43588 / DSM 3639 / JCM 9404 / F1).